The following is a 473-amino-acid chain: 7-dehydrocholesterol reductase (473 aa).

The segment at 1–20 (MGERRRANASRGDKKVANGE) is disordered. A run of 6 helical transmembrane segments spans residues 36–56 (FSLA…YYFV), 97–117 (IYLA…DILH), 175–195 (WIPL…FALV), 264–284 (VTNS…DFFW), 304–324 (LGWG…LYLV), and 329–349 (ELST…YYIF). NADP(+) contacts are provided by residues lysine 356, arginine 360, methionine 393, tryptophan 398, and 405–406 (NY). A helical transmembrane segment spans residues 419-439 (ACGFDHLLPYFYFIYMTILLV). Residues aspartate 445, 449–453 (CSSKY), and tyrosine 460 contribute to the NADP(+) site.

It belongs to the ERG4/ERG24 family.

The protein resides in the endoplasmic reticulum membrane. It carries out the reaction cholesterol + NADP(+) = 7-dehydrocholesterol + NADPH + H(+). It catalyses the reaction 7-dehydrodesmosterol + NADPH + H(+) = desmosterol + NADP(+). It functions in the pathway steroid biosynthesis; cholesterol biosynthesis. In terms of biological role, catalyzes the last step of the cholesterol synthesis pathway, which transforms cholesta-5,7-dien-3beta-ol (7-dehydrocholesterol,7-DHC) into cholesterol by reducing the C7-C8 double bond of its sterol core. Can also metabolize cholesta-5,7,24-trien-3beta-ol (7-dehydrodemosterol, 7-DHD) to desmosterol, which is then metabolized by the Delta(24)-sterol reductase (DHCR24) to cholesterol. Modulates ferroptosis (a form of regulated cell death driven by iron-dependent lipid peroxidation) through the metabolic breakdown of the anti-ferroptotic metabolites 7-DHC and 7-DHD which, when accumulated, divert the propagation of peroxyl radical-mediated damage from phospholipid components to its sterol core, protecting plasma and mitochondrial membranes from phospholipid autoxidation. This chain is 7-dehydrocholesterol reductase (dhcr7), found in Xenopus laevis (African clawed frog).